A 481-amino-acid chain; its full sequence is Guanine nucleotide exchange factor C9orf72 (481 aa).

The 172-residue stretch at 23 to 194 (SPLLAATFAY…ELLSSMKSHS (172 aa)) folds into the uDENN C9ORF72-type domain. Residues 200–343 (DIADTVLNDD…SELTAFWRAT (144 aa)) form the cDENN C9ORF72-type domain. In terms of domain architecture, dDENN C9ORF72-type spans 370–464 (VLHRDTLVKA…IKPGLHSFIF (95 aa)). Residues 461–481 (SFIFGRPFYTSVQERDVLMTF) form a required for the homodimerization of the C9orf72-SMCR8 complex region.

Component of the C9orf72-SMCR8 complex, at least composed of C9orf72, SMCR8 and WDR41. The complex is formed of two protomers, each individually consisting of one molecule each of C9orf72, SMCR8 and WDR41. The protomers homodimerize via an interaction between C9orf72 (via C-terminus) and SMCR8 (via N-terminus). Within each protomer SMCR8 (via DENN domain) acts as a bridging protein between WDR41 (via C-terminus and N-terminus) and C9orf72 (via C-terminus). The C9orf72-SMCR8 complex associates with the ULK1/ATG1 kinase complex. Interacts with ULK1/ATG1 kinase complex members ULK1, ATG13 and RB1CC1. Interacts with SMCR8; the interaction is direct. Interacts with HNRNPA1, HNRNPA2B1 and UBQLN2. Interacts with small Rab GTPase RAB1A; the interaction mediates recruitment of RAB1A to the ULK1/ATG1 kinase complex. Also interacts with small Rab GTPase RAB7A. Interacts with cofilin. Interacts with GTP-binding proteins ARF1 and ARF6. Interacts with the DLG4/PSD-95. Interacts with CARM1 (via PH domain-like fold). Interacts with RAB39A and RAB39B (in GDP-bound forms); functions as GEF for RAB39A and RAB39B. Both isoforms are widely expressed, including kidney, lung, liver, heart, testis and several brain regions, such as cerebellum. Also expressed in the frontal cortex and in lymphoblasts (at protein level).

It is found in the cytoplasm. Its subcellular location is the nucleus. It localises to the P-body. The protein resides in the stress granule. The protein localises to the endosome. It is found in the lysosome. Its subcellular location is the cytoplasmic vesicle. It localises to the autophagosome. The protein resides in the autolysosome. The protein localises to the secreted. It is found in the cell projection. Its subcellular location is the axon. It localises to the growth cone. The protein resides in the perikaryon. The protein localises to the dendrite. It is found in the presynapse. Its subcellular location is the postsynapse. It localises to the nucleus membrane. In terms of biological role, acts as a guanine-nucleotide releasing factor (GEF) for Rab GTPases by promoting the conversion of inactive RAB-GDP to the active form RAB-GTP. Acts as a GEF for RAB39A which enables HOPS-mediated autophagosome-lysosome membrane tethering and fusion in mammalian autophagy. Component of the C9orf72-SMCR8 complex where both subunits display GEF activity and that regulates autophagy. As part of the C9orf72-SMCR8-WDR41 (CSW) complex, functions as GEF for RAB8A and RAB39B, thereby promoting autophagosome maturation. As part of the C9orf72-SMCR8 complex, also functions as GTPase activating protein (GAP) for RAB8A and RAB11A in vitro. The C9orf72-SMCR8 complex also acts as a regulator of autophagy initiation by interacting with the ULK1/ATG1 kinase complex and modulating its protein kinase activity. Promotes initiation of autophagy by regulating the RAB1A-dependent trafficking of the ULK1/ATG1 kinase complex to the phagophore which leads to autophagosome formation. Acts as a regulator of mTORC1 signaling by promoting phosphorylation of mTORC1 substrates. Plays a role in endosomal trafficking. May be involved in regulating the maturation of phagosomes to lysosomes. Promotes the lysosomal localization and lysosome-mediated degradation of CARM1 which leads to inhibition of starvation-induced lipid metabolism. Regulates actin dynamics in motor neurons by inhibiting the GTP-binding activity of ARF6, leading to ARF6 inactivation. This reduces the activity of the LIMK1 and LIMK2 kinases which are responsible for phosphorylation and inactivation of cofilin, leading to CFL1/cofilin activation. Positively regulates axon extension and axon growth cone size in spinal motor neurons. Required for SMCR8 protein expression and localization at pre- and post-synaptic compartments in the forebrain, also regulates protein abundance of RAB3A and GRIA1/GLUR1 in post-synaptic compartments in the forebrain and hippocampus. Plays a role within the hematopoietic system in restricting inflammation and the development of autoimmunity. Functionally, regulates stress granule assembly in response to cellular stress. Its function is as follows. Does not play a role in regulation of stress granule assembly in response to cellular stress. In Homo sapiens (Human), this protein is Guanine nucleotide exchange factor C9orf72.